Here is a 556-residue protein sequence, read N- to C-terminus: 2-succinyl-5-enolpyruvyl-6-hydroxy-3-cyclohexene-1-carboxylate synthase (556 aa).

It belongs to the TPP enzyme family. MenD subfamily. In terms of assembly, homodimer. The cofactor is Mg(2+). Mn(2+) is required as a cofactor. Requires thiamine diphosphate as cofactor.

It catalyses the reaction isochorismate + 2-oxoglutarate + H(+) = 5-enolpyruvoyl-6-hydroxy-2-succinyl-cyclohex-3-ene-1-carboxylate + CO2. It participates in quinol/quinone metabolism; 1,4-dihydroxy-2-naphthoate biosynthesis; 1,4-dihydroxy-2-naphthoate from chorismate: step 2/7. It functions in the pathway quinol/quinone metabolism; menaquinone biosynthesis. Functionally, catalyzes the thiamine diphosphate-dependent decarboxylation of 2-oxoglutarate and the subsequent addition of the resulting succinic semialdehyde-thiamine pyrophosphate anion to isochorismate to yield 2-succinyl-5-enolpyruvyl-6-hydroxy-3-cyclohexene-1-carboxylate (SEPHCHC). In Shigella flexneri serotype 5b (strain 8401), this protein is 2-succinyl-5-enolpyruvyl-6-hydroxy-3-cyclohexene-1-carboxylate synthase.